A 296-amino-acid polypeptide reads, in one-letter code: Ribosomal RNA small subunit methyltransferase A (296 aa).

The S-adenosyl-L-methionine site is built by Asn30, Leu32, Gly57, Glu78, Asp103, and Asn128.

This sequence belongs to the class I-like SAM-binding methyltransferase superfamily. rRNA adenine N(6)-methyltransferase family. RsmA subfamily.

The protein localises to the cytoplasm. The enzyme catalyses adenosine(1518)/adenosine(1519) in 16S rRNA + 4 S-adenosyl-L-methionine = N(6)-dimethyladenosine(1518)/N(6)-dimethyladenosine(1519) in 16S rRNA + 4 S-adenosyl-L-homocysteine + 4 H(+). Specifically dimethylates two adjacent adenosines (A1518 and A1519) in the loop of a conserved hairpin near the 3'-end of 16S rRNA in the 30S particle. May play a critical role in biogenesis of 30S subunits. The chain is Ribosomal RNA small subunit methyltransferase A from Staphylococcus carnosus (strain TM300).